Consider the following 86-residue polypeptide: Translation initiation factor IF-1 2 (86 aa).

The S1-like domain occupies 1 to 72 (MAKEELLEME…TKARISFRHK (72 aa)).

It belongs to the IF-1 family. As to quaternary structure, component of the 30S ribosomal translation pre-initiation complex which assembles on the 30S ribosome in the order IF-2 and IF-3, IF-1 and N-formylmethionyl-tRNA(fMet); mRNA recruitment can occur at any time during PIC assembly.

It localises to the cytoplasm. In terms of biological role, one of the essential components for the initiation of protein synthesis. Stabilizes the binding of IF-2 and IF-3 on the 30S subunit to which N-formylmethionyl-tRNA(fMet) subsequently binds. Helps modulate mRNA selection, yielding the 30S pre-initiation complex (PIC). Upon addition of the 50S ribosomal subunit IF-1, IF-2 and IF-3 are released leaving the mature 70S translation initiation complex. The sequence is that of Translation initiation factor IF-1 2 from Aromatoleum aromaticum (strain DSM 19018 / LMG 30748 / EbN1) (Azoarcus sp. (strain EbN1)).